We begin with the raw amino-acid sequence, 470 residues long: DNA primase large subunit (470 aa).

Residues Cys279, Cys358, Cys376, and Cys414 each coordinate [4Fe-4S] cluster. The interval 449–470 (EEKKSAKQSNNKENENQSIDEK) is disordered.

This sequence belongs to the eukaryotic-type primase large subunit family. Heterodimer of a small subunit and a large subunit. [4Fe-4S] cluster serves as cofactor.

Its function is as follows. DNA primase is the polymerase that synthesizes small RNA primers for the Okazaki fragments made during discontinuous DNA replication. This Dictyostelium discoideum (Social amoeba) protein is DNA primase large subunit (prim2).